The following is a 567-amino-acid chain: Oxygen-dependent choline dehydrogenase (567 aa).

4–33 (DYIIIGAGSAGNVLAARLTEDADVTVLLLE) serves as a coordination point for FAD. H473 acts as the Proton acceptor in catalysis.

The protein belongs to the GMC oxidoreductase family. FAD serves as cofactor.

It catalyses the reaction choline + A = betaine aldehyde + AH2. The enzyme catalyses betaine aldehyde + NAD(+) + H2O = glycine betaine + NADH + 2 H(+). The protein operates within amine and polyamine biosynthesis; betaine biosynthesis via choline pathway; betaine aldehyde from choline (cytochrome c reductase route): step 1/1. Involved in the biosynthesis of the osmoprotectant glycine betaine. Catalyzes the oxidation of choline to betaine aldehyde and betaine aldehyde to glycine betaine at the same rate. This Yersinia pseudotuberculosis serotype O:1b (strain IP 31758) protein is Oxygen-dependent choline dehydrogenase.